The primary structure comprises 196 residues: V-type proton ATPase subunit E (196 aa).

The protein belongs to the V-ATPase E subunit family.

Produces ATP from ADP in the presence of a proton gradient across the membrane. The polypeptide is V-type proton ATPase subunit E (Clostridium botulinum (strain Eklund 17B / Type B)).